The chain runs to 93 residues: Cobalt transport protein CbiN (93 aa).

The next 2 helical transmembrane spans lie at 5–25 and 63–83; these read LILL…NHGG and LLFT…LGYA.

It belongs to the CbiN family. As to quaternary structure, forms an energy-coupling factor (ECF) transporter complex composed of an ATP-binding protein (A component, CbiO), a transmembrane protein (T component, CbiQ) and 2 possible substrate-capture proteins (S components, CbiM and CbiN) of unknown stoichimetry.

The protein resides in the cell inner membrane. Its pathway is cofactor biosynthesis; adenosylcobalamin biosynthesis. Its function is as follows. Part of the energy-coupling factor (ECF) transporter complex CbiMNOQ involved in cobalt import. This chain is Cobalt transport protein CbiN, found in Klebsiella pneumoniae subsp. pneumoniae (strain ATCC 700721 / MGH 78578).